Consider the following 386-residue polypeptide: 3-hydroxyisobutyryl-CoA hydrolase, mitochondrial (386 aa).

A mitochondrion-targeting transit peptide spans 1–32 (MGQREMWRLMSRFNAFKRTNTILHHLRMSKHT). An N6-acetyllysine; alternate mark is found at K55 and K92. An N6-succinyllysine; alternate mark is found at K55 and K92. Substrate is bound by residues E121, G146, E169, and D177. At K221 the chain carries N6-acetyllysine; alternate. K221 is modified (N6-succinyllysine; alternate). S234 is subject to Phosphoserine. K257 is subject to N6-succinyllysine. N6-acetyllysine; alternate is present on K297. K297 bears the N6-succinyllysine; alternate mark. Residue K301 is modified to N6-succinyllysine. K353 carries the N6-acetyllysine; alternate modification. Residue K353 is modified to N6-succinyllysine; alternate. At S356 the chain carries Phosphoserine. An N6-acetyllysine mark is found at K360 and K365. Position 377 is an N6-succinyllysine (K377).

Belongs to the enoyl-CoA hydratase/isomerase family. Highly expressed in liver and kidney, also detected in heart, muscle and brain (at protein level). Not detected in lung.

Its subcellular location is the mitochondrion. It catalyses the reaction 3-hydroxy-2-methylpropanoyl-CoA + H2O = 3-hydroxy-2-methylpropanoate + CoA + H(+). It participates in amino-acid degradation; L-valine degradation. Functionally, hydrolyzes 3-hydroxyisobutyryl-CoA (HIBYL-CoA), a saline catabolite. Has high activity toward isobutyryl-CoA. Could be an isobutyryl-CoA dehydrogenase that functions in valine catabolism. Also hydrolyzes 3-hydroxypropanoyl-CoA. This is 3-hydroxyisobutyryl-CoA hydrolase, mitochondrial (HIBCH) from Homo sapiens (Human).